The primary structure comprises 180 residues: MSDINSWCASVLKRVQWQEADTFECSNDLQRYWLLGLDSLSRRLEQHCNVLSVSVLDNTHVNPDKLTVEEEALLSGEVCLRRKVILKGDQQSWVYGRTLIPLSSLQDQPHDLTRQGHTPLGITVFSAQSAHRDKLQVGTIMTERGELFARRSRLWMNNKPMLVAELFLPEAPIYSKEVES.

Positions 82, 120, and 165 each coordinate substrate.

The protein belongs to the UbiC family.

It is found in the cytoplasm. It catalyses the reaction chorismate = 4-hydroxybenzoate + pyruvate. Its pathway is cofactor biosynthesis; ubiquinone biosynthesis. Functionally, removes the pyruvyl group from chorismate, with concomitant aromatization of the ring, to provide 4-hydroxybenzoate (4HB) for the ubiquinone pathway. The protein is Probable chorismate pyruvate-lyase of Aliivibrio fischeri (strain ATCC 700601 / ES114) (Vibrio fischeri).